The primary structure comprises 361 residues: Phosphoserine aminotransferase (361 aa).

R42 provides a ligand contact to L-glutamate. Residues 76-77 (AT), W102, T152, D172, and Q195 each bind pyridoxal 5'-phosphate. K196 is subject to N6-(pyridoxal phosphate)lysine. 237–238 (NT) provides a ligand contact to pyridoxal 5'-phosphate.

The protein belongs to the class-V pyridoxal-phosphate-dependent aminotransferase family. SerC subfamily. In terms of assembly, homodimer. Requires pyridoxal 5'-phosphate as cofactor.

It is found in the cytoplasm. The catalysed reaction is O-phospho-L-serine + 2-oxoglutarate = 3-phosphooxypyruvate + L-glutamate. The enzyme catalyses 4-(phosphooxy)-L-threonine + 2-oxoglutarate = (R)-3-hydroxy-2-oxo-4-phosphooxybutanoate + L-glutamate. It functions in the pathway amino-acid biosynthesis; L-serine biosynthesis; L-serine from 3-phospho-D-glycerate: step 2/3. Its pathway is cofactor biosynthesis; pyridoxine 5'-phosphate biosynthesis; pyridoxine 5'-phosphate from D-erythrose 4-phosphate: step 3/5. Its function is as follows. Catalyzes the reversible conversion of 3-phosphohydroxypyruvate to phosphoserine and of 3-hydroxy-2-oxo-4-phosphonooxybutanoate to phosphohydroxythreonine. The protein is Phosphoserine aminotransferase of Xanthomonas oryzae pv. oryzae (strain MAFF 311018).